A 235-amino-acid chain; its full sequence is Ubiquinone/menaquinone biosynthesis C-methyltransferase UbiE (235 aa).

T59, D84, and S123 together coordinate S-adenosyl-L-methionine.

The protein belongs to the class I-like SAM-binding methyltransferase superfamily. MenG/UbiE family.

It catalyses the reaction a 2-demethylmenaquinol + S-adenosyl-L-methionine = a menaquinol + S-adenosyl-L-homocysteine + H(+). The enzyme catalyses a 2-methoxy-6-(all-trans-polyprenyl)benzene-1,4-diol + S-adenosyl-L-methionine = a 5-methoxy-2-methyl-3-(all-trans-polyprenyl)benzene-1,4-diol + S-adenosyl-L-homocysteine + H(+). The protein operates within quinol/quinone metabolism; menaquinone biosynthesis; menaquinol from 1,4-dihydroxy-2-naphthoate: step 2/2. It participates in cofactor biosynthesis; ubiquinone biosynthesis. Methyltransferase required for the conversion of demethylmenaquinol (DMKH2) to menaquinol (MKH2) and the conversion of 2-polyprenyl-6-methoxy-1,4-benzoquinol (DDMQH2) to 2-polyprenyl-3-methyl-6-methoxy-1,4-benzoquinol (DMQH2). This chain is Ubiquinone/menaquinone biosynthesis C-methyltransferase UbiE, found in Campylobacter jejuni subsp. jejuni serotype O:23/36 (strain 81-176).